We begin with the raw amino-acid sequence, 1458 residues long: ABC multidrug transporter B (1458 aa).

A run of 5 helical transmembrane segments spans residues 30-50 (FSLL…VLII), 70-90 (LLWA…VLAV), 102-122 (ASIA…LLSC), 128-148 (STTP…FDIA), and 165-185 (IAIL…LEAV). A glycan (N-linked (GlcNAc...) asparagine) is linked at Asn208. A helical membrane pass occupies residues 273-295 (WPLLSAVPPRACLAALNFCQPLL). The 279-residue stretch at 283 to 561 (ACLAALNFCQ…LVMALMTFVG (279 aa)) folds into the ABC transmembrane type-1 1 domain. Asn309 carries an N-linked (GlcNAc...) asparagine glycan. Helical transmembrane passes span 314–334 (IGYG…VTMG), 387–407 (WQTI…IYLL), 411–431 (LGVA…GCLI), 501–521 (LGWT…YGIM), and 541–561 (LFAL…TFVG). The ABC transporter 1 domain maps to 626–853 (LTVKNATFAW…AGGYVSSFGL (228 aa)). N-linked (GlcNAc...) asparagine glycosylation occurs at Asn630. 660 to 667 (GPSGCGKS) provides a ligand contact to ATP. Residues Asn702, Asn804, and Asn879 are each glycosylated (N-linked (GlcNAc...) asparagine). The region spanning 933 to 1182 (PNGRTGYYLG…LVTFWTNLET (250 aa)) is the ABC transmembrane type-1 2 domain. 6 helical membrane-spanning segments follow: residues 940–960 (YLGI…IGCW), 978–998 (LLAT…SGSI), 1016–1036 (AAIN…LMGI), 1040–1060 (YAAI…KVYL), 1125–1145 (LTLT…VLVV), and 1156–1176 (VGVA…LVTF). In terms of domain architecture, ABC transporter 2 spans 1219 to 1449 (IEFKSVSAEY…EGSYFSRLYA (231 aa)). Residue 1252–1259 (GRTGSGKT) participates in ATP binding. N-linked (GlcNAc...) asparagine glycosylation is present at Asn1316.

It belongs to the ABC transporter superfamily. ABCC family. Conjugate transporter (TC 3.A.1.208) subfamily.

It localises to the cell membrane. Pleiotropic ABC efflux transporter that may be involved in A.fumigatus adaptation to azoles such as vorizonazole. This Aspergillus fumigatus (strain ATCC MYA-4609 / CBS 101355 / FGSC A1100 / Af293) (Neosartorya fumigata) protein is ABC multidrug transporter B.